A 256-amino-acid polypeptide reads, in one-letter code: MVKSHIGSWILVLFVAMWSDVGLCKKRPKPGGGWNTGGSRYPGQGSPGGNRYPPQGGGGWGQPHGGGWGQPHGGGWGQPHGGGWGQPHGGGGWGQGGTHSQWNKPSKPKTNMKHVAGAAAAGAVVGGLGGYMLGSAMSRPLIHFGNDYEDRYYRENMYRYPNQVYYRPVDQYNNQNTFVHDCVNITVKQHTVTTTTKGENFTETDIKMMERVVEQMCITQYQRESEAYYQRGASVILFSSPPVILLISFLIFLIVG.

Residues 1–24 form the signal peptide; it reads MVKSHIGSWILVLFVAMWSDVGLC. Positions 25 to 233 are interaction with GRB2, ERI3 and SYN1; that stretch reads KKRPKPGGGW…ESEAYYQRGA (209 aa). Residues 28–110 are disordered; it reads PKPGGGWNTG…QWNKPSKPKT (83 aa). 5 repeat units span residues 54 to 62, 63 to 70, 71 to 78, 79 to 86, and 87 to 95. The interval 54–95 is 5 X 8 AA tandem repeats of P-H-G-G-G-W-G-Q; sequence PQGGGGWGQPHGGGWGQPHGGGWGQPHGGGWGQPHGGGGWGQ. Positions 55–97 are enriched in gly residues; that stretch reads QGGGGWGQPHGGGWGQPHGGGWGQPHGGGWGQPHGGGGWGQGG. Residues H64, G65, G66, H72, G73, G74, H80, G81, G82, H88, G90, and G91 each contribute to the Cu(2+) site. A disulfide bridge links C182 with C217. 2 N-linked (GlcNAc...) asparagine glycosylation sites follow: N184 and N200. Residue A233 is the site of GPI-anchor amidated alanine attachment. Residues 234–256 constitute a propeptide, removed in mature form; that stretch reads SVILFSSPPVILLISFLIFLIVG.

The protein belongs to the prion family. As to quaternary structure, monomer and homodimer. Has a tendency to aggregate into amyloid fibrils containing a cross-beta spine, formed by a steric zipper of superposed beta-strands. Soluble oligomers may represent an intermediate stage on the path to fibril formation. Copper binding may promote oligomerization. Interacts with GRB2, APP, ERI3/PRNPIP and SYN1. Mislocalized cytosolically exposed PrP interacts with MGRN1; this interaction alters MGRN1 subcellular location and causes lysosomal enlargement. Interacts with KIAA1191.

The protein resides in the cell membrane. Its subcellular location is the golgi apparatus. Functionally, its primary physiological function is unclear. Has cytoprotective activity against internal or environmental stresses. May play a role in neuronal development and synaptic plasticity. May be required for neuronal myelin sheath maintenance. May play a role in iron uptake and iron homeostasis. Soluble oligomers are toxic to cultured neuroblastoma cells and induce apoptosis (in vitro). Association with GPC1 (via its heparan sulfate chains) targets PRNP to lipid rafts. Also provides Cu(2+) or Zn(2+) for the ascorbate-mediated GPC1 deaminase degradation of its heparan sulfate side chains. This Cervus elaphus (Red deer) protein is Major prion protein (PRNP).